The primary structure comprises 360 residues: Peptide chain release factor 1 (360 aa).

Gln-235 carries the post-translational modification N5-methylglutamine. The tract at residues 284–312 (AKRQQAEASTRRNLLGSGDRSDRNRTYNF) is disordered.

Belongs to the prokaryotic/mitochondrial release factor family. Methylated by PrmC. Methylation increases the termination efficiency of RF1.

It is found in the cytoplasm. Functionally, peptide chain release factor 1 directs the termination of translation in response to the peptide chain termination codons UAG and UAA. The sequence is that of Peptide chain release factor 1 from Escherichia coli O81 (strain ED1a).